The following is a 125-amino-acid chain: Fumarate reductase subunit D (125 aa).

3 consecutive transmembrane segments (helical) span residues 30-50 (FAMI…LGVI), 63-83 (FATS…PMWH), and 105-125 (IACY…IFMI).

The protein belongs to the FrdD family. As to quaternary structure, part of an enzyme complex containing four subunits: a flavoprotein (FrdA), an iron-sulfur protein (FrdB), and two hydrophobic anchor proteins (FrdC and FrdD).

It is found in the cell inner membrane. Anchors the catalytic components of the fumarate reductase complex to the cell membrane, binds quinones. This chain is Fumarate reductase subunit D, found in Vibrio campbellii (strain ATCC BAA-1116).